Reading from the N-terminus, the 386-residue chain is 8-amino-7-oxononanoate synthase (386 aa).

Arg-19 is a binding site for substrate. Residue Gly-106 to Tyr-107 participates in pyridoxal 5'-phosphate binding. Residue His-131 participates in substrate binding. The pyridoxal 5'-phosphate site is built by Ser-177, His-205, and Thr-233. At Lys-236 the chain carries N6-(pyridoxal phosphate)lysine. Thr-350 contacts substrate.

The protein belongs to the class-II pyridoxal-phosphate-dependent aminotransferase family. BioF subfamily. In terms of assembly, homodimer. Pyridoxal 5'-phosphate serves as cofactor.

It catalyses the reaction 6-carboxyhexanoyl-[ACP] + L-alanine + H(+) = (8S)-8-amino-7-oxononanoate + holo-[ACP] + CO2. Its pathway is cofactor biosynthesis; biotin biosynthesis. Catalyzes the decarboxylative condensation of pimeloyl-[acyl-carrier protein] and L-alanine to produce 8-amino-7-oxononanoate (AON), [acyl-carrier protein], and carbon dioxide. This is 8-amino-7-oxononanoate synthase from Alcanivorax borkumensis (strain ATCC 700651 / DSM 11573 / NCIMB 13689 / SK2).